A 504-amino-acid polypeptide reads, in one-letter code: Beta-xylosidase (504 aa).

Residue glutamate 160 is the Proton donor of the active site. Glutamate 280 (nucleophile) is an active-site residue.

This sequence belongs to the glycosyl hydrolase 39 family.

The catalysed reaction is Hydrolysis of (1-&gt;4)-beta-D-xylans, to remove successive D-xylose residues from the non-reducing termini.. This Geobacillus stearothermophilus (Bacillus stearothermophilus) protein is Beta-xylosidase (xynB).